We begin with the raw amino-acid sequence, 93 residues long: Large ribosomal subunit protein bL27 (93 aa).

The propeptide occupies 1–9 (MLQLNLQFF). The segment at 14 to 33 (GVGSTKNGRDSISKRLGAKR) is disordered.

The protein belongs to the bacterial ribosomal protein bL27 family. Post-translationally, the N-terminus is cleaved by ribosomal processing cysteine protease Prp.

This is Large ribosomal subunit protein bL27 from Exiguobacterium sp. (strain ATCC BAA-1283 / AT1b).